A 164-amino-acid polypeptide reads, in one-letter code: uncharacterized protein (164 aa).

It is found in the mitochondrion. This is an uncharacterized protein from Arabidopsis thaliana (Mouse-ear cress).